A 183-amino-acid polypeptide reads, in one-letter code: GTP cyclohydrolase 1 (183 aa).

Positions 71, 74, and 142 each coordinate Zn(2+).

The protein belongs to the GTP cyclohydrolase I family. Toroid-shaped homodecamer, composed of two pentamers of five dimers.

The catalysed reaction is GTP + H2O = 7,8-dihydroneopterin 3'-triphosphate + formate + H(+). Its pathway is cofactor biosynthesis; 7,8-dihydroneopterin triphosphate biosynthesis; 7,8-dihydroneopterin triphosphate from GTP: step 1/1. The protein is GTP cyclohydrolase 1 of Leptospira interrogans serogroup Icterohaemorrhagiae serovar copenhageni (strain Fiocruz L1-130).